A 592-amino-acid chain; its full sequence is MSRHRDVKNLDLDDYELDEEPGEEELTEEQEEEFRSAVATVRETLLGVPISEKEIADTVWYYYFDVEKSVNYLLQKASSKAGAKEKQNTDSQKEKKQNKSKEALADAKDPLDESSNGIKNLSLNKNDEPAFQTNGEVKMKNSSESDNQPEKKKIKKQNPTDLVSVPEIFEQSNPKPVVHLVVTGHVDSGKSTMLGRIMFELGEINSRSMQKLHNEAANSGKGSFSYAWLLDTTEEERARGVTMDVASTTFESDKKIYEIGDAPGHRDFISGMIAGASSADFAVLVVDSSQNNFERGFLENGQTREHAYLLRALGISEIVVSVNKLDLMSWSEDRFQEIKNIVSDFLIKMVGFKTSNVHFVPISAISGTNLIQKDSSDLYKWYKGPTLLSALDQLVPPEKPYRKPLRLSIDDVYRSPRSVTVTGRVEAGNVQVNQVLYDVSSQEDAYVKNVIRNSDPSSTWAVAGDTVTLQLADIEVNQLRPGDILSNYENPVRRVRSFVAEIQTFDIHGPILSGSTLVLHLGRTVTSVSLKIVTVNNKRSRHIASRKRALVRISFLDGLFPLCLAEECPALGRFILRRSGDTVAAGIVKELC.

2 disordered regions span residues 1-35 (MSRHRDVKNLDLDDYELDEEPGEEELTEEQEEEFR) and 78-159 (SSKA…KQNP). The span at 12 to 32 (LDDYELDEEPGEEELTEEQEE) shows a compositional bias: acidic residues. Residues 82–111 (GAKEKQNTDSQKEKKQNKSKEALADAKDPL) are compositionally biased toward basic and acidic residues. Polar residues predominate over residues 113–124 (ESSNGIKNLSLN). The segment covering 137–151 (VKMKNSSESDNQPEK) has biased composition (basic and acidic residues). The tr-type G domain occupies 175-401 (KPVVHLVVTG…DQLVPPEKPY (227 aa)). Positions 184–191 (GHVDSGKS) are G1. 184–191 (GHVDSGKS) contacts GTP. Positions 240–244 (GVTMD) are G2. A G3 region spans residues 261-264 (DAPG). GTP-binding positions include 323–326 (NKLD) and 352–355 (FKTS). The interval 323-326 (NKLD) is G4. The interval 363-365 (SAI) is G5.

It belongs to the TRAFAC class translation factor GTPase superfamily. Classic translation factor GTPase family. As to quaternary structure, component of the Dom34-Hbs1 complex, also named Pelota-HBS1L complex, composed of dom34 and hbs1.

The protein resides in the cytoplasm. It catalyses the reaction GTP + H2O = GDP + phosphate + H(+). In terms of biological role, GTPase component of the Dom34-Hbs1 complex, a complex that recognizes stalled ribosomes and triggers the No-Go Decay (NGD) pathway. The Dom34-Hbs1 complex recognizes ribosomes stalled at the 3' end of an mRNA and engages stalled ribosomes by destabilizing mRNA in the mRNA channel. Following ribosome-binding, the Pelota-HBS1L complex promotes the disassembly of stalled ribosomes, followed by degradation of damaged mRNAs as part of the NGD pathway. This is Elongation factor 1 alpha-like protein from Schizosaccharomyces pombe (strain 972 / ATCC 24843) (Fission yeast).